The following is a 561-amino-acid chain: SUN domain-containing protein 5 (561 aa).

The helical transmembrane segment at 36–56 threads the bilayer; the sequence is GSFFERSISLVLLLWCFLFLV. The SUN domain occupies 158-318; that stretch reads NGSSQLVNNG…SVVEVFGIDA (161 aa). Residues 345–367 are disordered; the sequence is ADEKQDGEIKSNRTDQIGKETEA. A coiled-coil region spans residues 454–499; that stretch reads MEKELRDLELWKTLVASRVESLARGNSALRLDVEKIVKEQANLESK. Transmembrane regions (helical) follow at residues 501-521 and 540-560; these read LGVL…LVST and PDSG…IHLL.

In terms of assembly, forms homomers. Interacts with SUN3 and TIK.

Its subcellular location is the membrane. Encodes a member of the mid-SUN subfamily of SUN-domain proteins. It is involved in early seed development and nuclear morphology. [TAIR]. This is SUN domain-containing protein 5 from Arabidopsis thaliana (Mouse-ear cress).